Consider the following 1024-residue polypeptide: NLR family CARD domain-containing protein 4 (1024 aa).

The CARD domain maps to Met1 to Asn88. Positions Glu95–Gly298 are nucleotide-binding domain (NBD). Residues Thr135, Gly172–Thr177, and His443 each bind ATP. The region spanning Ser163–Lys476 is the NACHT domain. The segment at Ala356–Glu463 is winged-helix domain (WHD). Position 533 is a phosphoserine (Ser533). LRR repeat units lie at residues Phe578 to Phe598, Lys656 to Tyr679, Val735 to Ser758, Leu762 to Glu785, Leu787 to Val812, Glu824 to Leu847, Ile848 to Glu870, Leu878 to Gln902, Lys911 to Met933, Leu936 to Asn963, Lys965 to Arg985, and Glu999 to Leu1021.

In terms of assembly, homooligomer; homooligomerizes following activation of Naip proteins by pathogenic proteins such as S.typhimurium (Salmonella) flagellin or PrgJ. Component of the NLRC4 inflammasome, at least composed of NLRC4, caspase-1 (CASP1) and some NAIP protein (Naip, Naip2 or Naip5). Interacts with Naip5 and Naip6; following Naip5 and Naip6 engagement by Salmonella flagellin. Interacts with Naip2; following Naip2 engagement by Salmonella PrgJ. The inflammasome is a huge complex that contains multiple copies of NLRC4 and a single Naip protein chain. Some NLRC4 inflammasomes contain PYCARD/ASC, while some others directly contact and activate CASP1. Interacts with EIF2AK2/PKR. Phosphorylated at Ser-533 following infection of macrophages with S.typhimurium (Salmonella). Phosphorylation is essential for NLRC4 inflammasome function to promote caspase-1 activation and pyroptosis. PRKCD phosphorylates Ser-533 in vitro. In terms of tissue distribution, expressed by intestinal mononuclear phagocytes.

The protein localises to the cytoplasm. Its subcellular location is the cytosol. It is found in the inflammasome. Its function is as follows. Key component of inflammasomes that indirectly senses specific proteins from pathogenic bacteria and fungi and responds by assembling an inflammasome complex that promotes caspase-1 activation, cytokine production and macrophage pyroptosis. The NLRC4 inflammasome is activated as part of the innate immune response to a range of intracellular bacteria. It senses pathogenic proteins of the type III secretion system (T3SS) and type IV secretion system (T4SS) such as flagellin and PrgJ-like rod proteins via the Naip proteins (Naip1, Naip2 or Naip5): specific Naip proteins recognize and bind pathogenic proteins, driving assembly and activation of the NLRC4 inflammasome. The NLRC4 inflammasome senses Gram-negative bacteria such as L.pneumophila and P.aeruginosa, enteric pathogens S.typhimurium (Salmonella) and S.flexneri and fungal pathogen C.albicans. In intestine, the NLRC4 inflammasome is able to discriminate between commensal and pathogenic bacteria and specifically drives production of interleukin-1 beta (IL1B) in response to infection by Salmonella or P.aeruginosa. In case of L.pneumophila infection the inflammasome acts by activating caspase-7. The protein is NLR family CARD domain-containing protein 4 (Nlrc4) of Mus musculus (Mouse).